A 201-amino-acid polypeptide reads, in one-letter code: Small ribosomal subunit protein uS4 (201 aa).

The S4 RNA-binding domain occupies 93–153; it reads ARLDNVVYRM…EKSKSLEAID (61 aa).

This sequence belongs to the universal ribosomal protein uS4 family. Part of the 30S ribosomal subunit. Contacts protein S5. The interaction surface between S4 and S5 is involved in control of translational fidelity.

One of the primary rRNA binding proteins, it binds directly to 16S rRNA where it nucleates assembly of the body of the 30S subunit. Functionally, with S5 and S12 plays an important role in translational accuracy. The protein is Small ribosomal subunit protein uS4 of Flavobacterium psychrophilum (strain ATCC 49511 / DSM 21280 / CIP 103535 / JIP02/86).